A 163-amino-acid chain; its full sequence is 3-isopropylmalate dehydratase small subunit (163 aa).

The protein belongs to the LeuD family. LeuD type 2 subfamily. Heterodimer of LeuC and LeuD.

The catalysed reaction is (2R,3S)-3-isopropylmalate = (2S)-2-isopropylmalate. It participates in amino-acid biosynthesis; L-leucine biosynthesis; L-leucine from 3-methyl-2-oxobutanoate: step 2/4. In terms of biological role, catalyzes the isomerization between 2-isopropylmalate and 3-isopropylmalate, via the formation of 2-isopropylmaleate. The protein is 3-isopropylmalate dehydratase small subunit of Brachyspira hyodysenteriae (strain ATCC 49526 / WA1).